A 2717-amino-acid chain; its full sequence is Naringenin synthase (2717 aa).

The tract at residues 13 to 422 (HHAVESRDKV…VGRKKELIIR (410 aa)) is adenylation (A) domain. The Carrier 1 domain occupies 531 to 617 (AAVEALVLAE…AVRDYLFNRL (87 aa)). The residue at position 576 (Ser-576) is an O-(pantetheine 4'-phosphoryl)serine. The Ketosynthase family 3 (KS3) domain occupies 638–1066 (AEPIAIISMA…GTNAHIILEQ (429 aa)). Residues Cys-810, His-945, and His-988 each act as for beta-ketoacyl synthase activity in the active site. The Malonyl-CoA:ACP transacylase (MAT) domain maps to 1204-1462 (PIFSRAFKEA…GPSAVLSPHV (259 aa)). The interval 1549–1688 (HGVLYRTTSI…GTLKLISLPP (140 aa)) is N-terminal hotdog fold. The 299-residue stretch at 1549–1847 (HGVLYRTTSI…LRAVQPPVVE (299 aa)) folds into the PKS/mFAS DH domain. The segment at 1561 to 1842 (TNDIICAGFV…ISEVMLRAVQ (282 aa)) is dehydratase (DH) domain. The active-site Proton acceptor; for dehydratase activity is the His-1581. The segment at 1703–1847 (NSEVDVSKAY…LRAVQPPVVE (145 aa)) is C-terminal hotdog fold. Asp-1764 functions as the Proton donor; for dehydratase activity in the catalytic mechanism. Residues 2008–2186 (GTVLITGGTG…AVSLAWGPWA (179 aa)) enclose the Ketoreductase (KR) domain. The Carrier 2 domain occupies 2277–2354 (SRSDTLLGLV…ALVQYLLDRI (78 aa)). Residue Ser-2313 is modified to O-(pantetheine 4'-phosphoryl)serine. Residues 2361–2373 (EIELDQDVAEEET) show a composition bias toward acidic residues. A disordered region spans residues 2361–2412 (EIELDQDVAEEETVSGTNGHQNGHQNGTQNGHSNGHANGASTNGDATDGIDP). A compositionally biased stretch (low complexity) spans 2375 to 2396 (SGTNGHQNGHQNGTQNGHSNGH). The interval 2497-2711 (SLSVYSAVAA…AIAVEIEHWA (215 aa)) is thioester reductase (TE) domain.

It in the N-terminal section; belongs to the NRP synthetase family. It depends on pantetheine 4'-phosphate as a cofactor.

In terms of biological role, PKS-NRPS hybrid synthetase that, alone, is sufficient to produce naringenin chalcone, the direct precursor of naringenin, by using p-coumaric acid (p-CA) or p-hydroxybenzoic acid (p-HBA) with the involvement of malonyl-CoA molecules. The adenylation (A) domain activates p-CA or p-HBA as adenylates, which are transferred to the thiol group of the pantetheinyl residue of the T domain, and further transferred to the adjacent PKS portion of fnsA. Besides p-CA and p-HBA, the A domain is also able to activate other substrates such as cinnamic acid and salicyclic acid. Within the PKS portion of fnsA, p-CA and p-HBA act as starter units for respectively three or four malonyl-CoA molecules for elongation by the AT and KS domains of fnsA. Afterwards, naringenin chalcone is cyclized through Claisen condensation and thereby released either spontaneously or catalyzed by the TE domain. Finally, naringenin chalcone is converted to naringenin spontaneously or by a chalcone isomerase. This is Naringenin synthase from Pestalotiopsis fici (strain W106-1 / CGMCC3.15140).